The sequence spans 180 residues: Probable RNA 2'-phosphotransferase (180 aa).

This sequence belongs to the KptA/TPT1 family.

Its function is as follows. Removes the 2'-phosphate from RNA via an intermediate in which the phosphate is ADP-ribosylated by NAD followed by a presumed transesterification to release the RNA and generate ADP-ribose 1''-2''-cyclic phosphate (APPR&gt;P). May function as an ADP-ribosylase. The protein is Probable RNA 2'-phosphotransferase of Thermococcus kodakarensis (strain ATCC BAA-918 / JCM 12380 / KOD1) (Pyrococcus kodakaraensis (strain KOD1)).